The primary structure comprises 78 residues: Exodeoxyribonuclease 7 small subunit (78 aa).

Belongs to the XseB family. Heterooligomer composed of large and small subunits.

The protein localises to the cytoplasm. The catalysed reaction is Exonucleolytic cleavage in either 5'- to 3'- or 3'- to 5'-direction to yield nucleoside 5'-phosphates.. In terms of biological role, bidirectionally degrades single-stranded DNA into large acid-insoluble oligonucleotides, which are then degraded further into small acid-soluble oligonucleotides. The polypeptide is Exodeoxyribonuclease 7 small subunit (Nocardia farcinica (strain IFM 10152)).